The following is a 182-amino-acid chain: MPLDLALKRKYYEEVRPELIRRFGYQNVWEVPRLEKVVINQGLGEAKEDARILEKAAQELALITGQKPAVTRAKKSISNFKLRKGMPIGLRVTLRRDRMWIFLEKLLNVALPRIRDFRGLNPNSFDGRGNYNLGLREQLIFPEITYDMVDALRGMDIAVVTTAETDEEARALLELLGFPFRK.

This sequence belongs to the universal ribosomal protein uL5 family. As to quaternary structure, part of the 50S ribosomal subunit; part of the 5S rRNA/L5/L18/L25 subcomplex. Contacts the 5S rRNA and the P site tRNA. Forms a bridge to the 30S subunit in the 70S ribosome.

This is one of the proteins that bind and probably mediate the attachment of the 5S RNA into the large ribosomal subunit, where it forms part of the central protuberance. In the 70S ribosome it contacts protein S13 of the 30S subunit (bridge B1b), connecting the 2 subunits; this bridge is implicated in subunit movement. Contacts the P site tRNA; the 5S rRNA and some of its associated proteins might help stabilize positioning of ribosome-bound tRNAs. In Thermus thermophilus (strain ATCC BAA-163 / DSM 7039 / HB27), this protein is Large ribosomal subunit protein uL5.